We begin with the raw amino-acid sequence, 510 residues long: Light-independent protochlorophyllide reductase subunit B (510 aa).

Aspartate 36 contacts [4Fe-4S] cluster. Aspartate 297 functions as the Proton donor in the catalytic mechanism. A substrate-binding site is contributed by glycine 432–methionine 433.

It belongs to the ChlB/BchB/BchZ family. In terms of assembly, protochlorophyllide reductase is composed of three subunits; ChlL, ChlN and ChlB. Forms a heterotetramer of two ChlB and two ChlN subunits. Requires [4Fe-4S] cluster as cofactor.

The protein resides in the plastid. It is found in the chloroplast. The catalysed reaction is chlorophyllide a + oxidized 2[4Fe-4S]-[ferredoxin] + 2 ADP + 2 phosphate = protochlorophyllide a + reduced 2[4Fe-4S]-[ferredoxin] + 2 ATP + 2 H2O. It participates in porphyrin-containing compound metabolism; chlorophyll biosynthesis (light-independent). Its function is as follows. Component of the dark-operative protochlorophyllide reductase (DPOR) that uses Mg-ATP and reduced ferredoxin to reduce ring D of protochlorophyllide (Pchlide) to form chlorophyllide a (Chlide). This reaction is light-independent. The NB-protein (ChlN-ChlB) is the catalytic component of the complex. The sequence is that of Light-independent protochlorophyllide reductase subunit B from Pinus koraiensis (Korean pine).